The following is an 84-amino-acid chain: Putative membrane protein insertion efficiency factor (84 aa).

This sequence belongs to the UPF0161 family.

The protein localises to the cell inner membrane. Could be involved in insertion of integral membrane proteins into the membrane. This chain is Putative membrane protein insertion efficiency factor, found in Shewanella sp. (strain ANA-3).